The sequence spans 815 residues: Bifunctional purine biosynthetic protein purD (815 aa).

Residues 6–452 (NILVIGSGSR…YRKDIGQKAL (447 aa)) form a GARS region. Residues 113–343 (KDFMARNNIP…LFEIVLACIE (231 aa)) form the ATP-grasp domain. Position 139-200 (139-200 (IESLNYKIVL…EEFLDGEECS (62 aa))) interacts with ATP. Positions 313 and 315 each coordinate Mg(2+). An AIRS region spans residues 469–801 (VSYSESGVDI…KVYKIGKIIN (333 aa)).

It in the N-terminal section; belongs to the GARS family. This sequence in the C-terminal section; belongs to the AIR synthase family. The cofactor is Mg(2+). Requires Mn(2+) as cofactor.

The protein resides in the cytoplasm. Its subcellular location is the cytosol. It carries out the reaction 5-phospho-beta-D-ribosylamine + glycine + ATP = N(1)-(5-phospho-beta-D-ribosyl)glycinamide + ADP + phosphate + H(+). It catalyses the reaction 2-formamido-N(1)-(5-O-phospho-beta-D-ribosyl)acetamidine + ATP = 5-amino-1-(5-phospho-beta-D-ribosyl)imidazole + ADP + phosphate + H(+). Its pathway is purine metabolism; IMP biosynthesis via de novo pathway; 5-amino-1-(5-phospho-D-ribosyl)imidazole from N(2)-formyl-N(1)-(5-phospho-D-ribosyl)glycinamide: step 2/2. It participates in purine metabolism; IMP biosynthesis via de novo pathway; N(1)-(5-phospho-D-ribosyl)glycinamide from 5-phospho-alpha-D-ribose 1-diphosphate: step 2/2. Its function is as follows. Catalyzes the second and fifth step in the 'de novo' purine biosynthesis pathway; contains phosphoribosylamine--glycine ligase (GARS) and phosphoribosylformylglycinamidine cyclo-ligase (AIRS) activities. The chain is Bifunctional purine biosynthetic protein purD (purD) from Dictyostelium discoideum (Social amoeba).